Reading from the N-terminus, the 609-residue chain is Phosphoenolpyruvate carboxykinase [GTP] (609 aa).

Substrate is bound by residues Arg-81 and 220-222 (YGG). The Mn(2+) site is built by Lys-229 and His-249. Ser-271 serves as a coordination point for substrate. 272–277 (ACGKTN) contacts GTP. Cys-273 is a catalytic residue. Asp-296 serves as a coordination point for Mn(2+). 387–389 (NSR) contributes to the substrate binding site. GTP-binding positions include Arg-389, Arg-420, and 515-518 (FGEN).

The protein belongs to the phosphoenolpyruvate carboxykinase [GTP] family. In terms of assembly, monomer. Mn(2+) is required as a cofactor.

The protein localises to the cytoplasm. It catalyses the reaction oxaloacetate + GTP = phosphoenolpyruvate + GDP + CO2. It functions in the pathway carbohydrate biosynthesis; gluconeogenesis. Its function is as follows. Catalyzes the conversion of oxaloacetate (OAA) to phosphoenolpyruvate (PEP), the rate-limiting step in the metabolic pathway that produces glucose from lactate and other precursors derived from the citric acid cycle. This Mycobacterium leprae (strain Br4923) protein is Phosphoenolpyruvate carboxykinase [GTP].